The sequence spans 284 residues: Deoxyribonuclease-1 (284 aa).

The N-terminal stretch at 1–22 (MRYTGLMGILLTLVNLLQLAAT) is a signal peptide. N-linked (GlcNAc...) asparagine glycosylation occurs at Asn-40. Glu-100 is a catalytic residue. Cys-123 and Cys-126 are oxidised to a cystine. Asn-128 is a glycosylation site (N-linked (GlcNAc...) asparagine). His-156 is an active-site residue. The cysteines at positions 195 and 231 are disulfide-linked.

This sequence belongs to the DNase I family. The cofactor is Ca(2+). It depends on Mg(2+) as a cofactor.

The protein resides in the secreted. It localises to the zymogen granule. Its subcellular location is the nucleus envelope. The enzyme catalyses Endonucleolytic cleavage to 5'-phosphodinucleotide and 5'-phosphooligonucleotide end-products.. In terms of biological role, serum endocuclease secreted into body fluids by a wide variety of exocrine and endocrine organs. Expressed by non-hematopoietic tissues and preferentially cleaves protein-free DNA. Among other functions, seems to be involved in cell death by apoptosis. Binds specifically to G-actin and blocks actin polymerization. Together with DNASE1L3, plays a key role in degrading neutrophil extracellular traps (NETs). NETs are mainly composed of DNA fibers and are released by neutrophils to bind pathogens during inflammation. Degradation of intravascular NETs by DNASE1 and DNASE1L3 is required to prevent formation of clots that obstruct blood vessels and cause organ damage following inflammation. This is Deoxyribonuclease-1 (Dnase1) from Rattus norvegicus (Rat).